Here is a 474-residue protein sequence, read N- to C-terminus: Zinc finger protein 230 (474 aa).

Residues 8–76 enclose the KRAB domain; it reads VTFKDVAVFF…ETATQREGNS (69 aa). The interval 80-167 is KRNB; sequence TIAEAGPHED…PQQFHSGEKS (88 aa). 9 C2H2-type zinc fingers span residues 168-190, 196-218, 224-246, 252-274, 280-302, 308-330, 336-358, 364-386, and 392-414; these read HTCN…QRVH, SKCD…ERVH, FKCE…CKLH, YICE…QIIH, FKCE…CMVH, YKSE…QIIH, YNCK…QRIH, YRCE…QRVH, and YNCK…KKLH. The C2H2-type 10; atypical zinc-finger motif lies at 420–442; the sequence is FKCEDCGKRLVHRSFCKDQQGDH.

The protein belongs to the krueppel C2H2-type zinc-finger protein family.

It localises to the nucleus. May be involved in transcriptional regulation. The sequence is that of Zinc finger protein 230 (ZNF230) from Homo sapiens (Human).